A 600-amino-acid polypeptide reads, in one-letter code: Alpha pinene synthase, chloroplastic (600 aa).

A disordered region spans residues 1–26 (MSSISMHARPLNISAANNHHPSWDRR). A chloroplast-targeting transit peptide spans 1–31 (MSSISMHARPLNISAANNHHPSWDRRVSKPR). Residues D354, D358, D498, and E506 each coordinate Mg(2+). A DDXXD motif motif is present at residues 354-358 (DDVYD).

Belongs to the terpene synthase family. Tpsa subfamily. Mg(2+) serves as cofactor. It depends on Mn(2+) as a cofactor. Barely detectable in leaves.

The protein resides in the plastid. Its subcellular location is the chloroplast. It catalyses the reaction (2E)-geranyl diphosphate = alpha-pinene + diphosphate. It functions in the pathway secondary metabolite biosynthesis; terpenoid biosynthesis. Its function is as follows. Monoterpene synthase involved in the biosynthesis of volatile compounds widely used in aromatherapy and folk medicine, and present in culinary herbs. Mediates the conversion of (2E)-geranyl diphosphate (GPP) into alpha-pinene and, as minor compounds, into alpha-phellandrene, limonene and alpha-terpinolene. The protein is Alpha pinene synthase, chloroplastic of Lavandula stoechas (Butterfly lavender).